A 347-amino-acid polypeptide reads, in one-letter code: Spermidine/putrescine import ATP-binding protein PotA (347 aa).

One can recognise an ABC transporter domain in the interval 6-238; it reads LEIKNLSHYY…PKTKFVADFI (233 aa). 40–47 serves as a coordination point for ATP; it reads GPSGCGKT.

Belongs to the ABC transporter superfamily. Spermidine/putrescine importer (TC 3.A.1.11.1) family. The complex is composed of two ATP-binding proteins (PotA), two transmembrane proteins (PotB and PotC) and a solute-binding protein (PotD).

It localises to the cell inner membrane. It catalyses the reaction ATP + H2O + polyamine-[polyamine-binding protein]Side 1 = ADP + phosphate + polyamineSide 2 + [polyamine-binding protein]Side 1.. In terms of biological role, part of the ABC transporter complex PotABCD involved in spermidine/putrescine import. Responsible for energy coupling to the transport system. This chain is Spermidine/putrescine import ATP-binding protein PotA, found in Borreliella afzelii (strain PKo) (Borrelia afzelii).